We begin with the raw amino-acid sequence, 177 residues long: Parathyroid hormone-related protein (177 aa).

The first 24 residues, 1–24 (MLRRLVQQWSVLVFLLSYSVPSRG), serve as a signal peptide directing secretion. A propeptide spanning residues 25–34 (RSVEGLGRRL) is cleaved from the precursor. Positions 57–68 (RFFLHHLIAEIH) are important for receptor binding. The disordered stretch occupies residues 74 to 177 (ATSEVSPNSK…TSLEPSSRTH (104 aa)). The segment covering 76-90 (SEVSPNSKPAPNTKN) has biased composition (polar residues). The short motif at 108-129 (TNKVETYKEQPLKTPGKKKKGK) is the Nuclear localization signal element. Residues 109-118 (NKVETYKEQP) are compositionally biased toward basic and acidic residues. The segment covering 122-132 (PGKKKKGKPGK) has biased composition (basic residues). Low complexity predominate over residues 161-177 (PHTSPTSTSLEPSSRTH).

This sequence belongs to the parathyroid hormone family. PTHrP interacts with PTH1R (via N-terminal extracellular domain). In terms of processing, there are several secretory forms, including osteostatin, arising from endoproteolytic cleavage of the initial translation product. Each of these secretory forms is believed to have one or more of its own receptors that mediates the normal paracrine, autocrine and endocrine actions.

Its subcellular location is the secreted. It localises to the cytoplasm. It is found in the nucleus. Its function is as follows. Neuroendocrine peptide which is a critical regulator of cellular and organ growth, development, migration, differentiation and survival and of epithelial calcium ion transport. Acts by binding to its receptor, PTH1R, activating G protein-coupled receptor signaling. Regulates endochondral bone development and epithelial-mesenchymal interactions during the formation of the mammary glands and teeth. Required for skeletal homeostasis. Promotes mammary mesenchyme differentiation and bud outgrowth by modulating mesenchymal cell responsiveness to BMPs. Up-regulates BMPR1A expression in the mammary mesenchyme and this increases the sensitivity of these cells to BMPs and allows them to respond to BMP4 in a paracrine and/or autocrine fashion. BMP4 signaling in the mesenchyme, in turn, triggers epithelial outgrowth and augments MSX2 expression, which causes the mammary mesenchyme to inhibit hair follicle formation within the nipple sheath. Functionally, potent inhibitor of osteoclastic bone resorption. This is Parathyroid hormone-related protein (Pthlh) from Rattus norvegicus (Rat).